An 84-amino-acid chain; its full sequence is Toxin BmKaTx13 (84 aa).

Residues 1 to 19 form the signal peptide; it reads MNYLVMISFALLLMKGVES. An LCN-type CS-alpha/beta domain is found at 21–83; the sequence is RDAYIAKPEN…VPIRVPGKCH (63 aa). 4 cysteine pairs are disulfide-bonded: C31-C82, C35-C55, C41-C65, and C45-C67. Position 84 (R84) is a propeptide, removed by a carboxypeptidase.

Belongs to the long (4 C-C) scorpion toxin superfamily. Sodium channel inhibitor family. Alpha subfamily. Expressed by the venom gland.

It localises to the secreted. In terms of biological role, alpha toxins bind voltage-independently at site-3 of sodium channels (Nav) and inhibit the inactivation of the activated channels, thereby blocking neuronal transmission. This toxin is active against mammals. The protein is Toxin BmKaTx13 of Olivierus martensii (Manchurian scorpion).